A 394-amino-acid chain; its full sequence is Cell division protein FtsZ (394 aa).

Residues 21–25 (GGGGN), 108–110 (GTG), glutamate 139, arginine 143, and aspartate 187 contribute to the GTP site.

Belongs to the FtsZ family. Homodimer. Polymerizes to form a dynamic ring structure in a strictly GTP-dependent manner. Interacts directly with several other division proteins. Interacts with the SulA inhibitor.

Its subcellular location is the cytoplasm. Its function is as follows. Essential cell division protein that forms a contractile ring structure (Z ring) at the future cell division site. The regulation of the ring assembly controls the timing and the location of cell division. One of the functions of the FtsZ ring is to recruit other cell division proteins to the septum to produce a new cell wall between the dividing cells. Binds GTP and shows GTPase activity. In Pseudomonas aeruginosa (strain ATCC 15692 / DSM 22644 / CIP 104116 / JCM 14847 / LMG 12228 / 1C / PRS 101 / PAO1), this protein is Cell division protein FtsZ.